Consider the following 343-residue polypeptide: 4-hydroxy-2-oxovalerate aldolase 2 (343 aa).

In terms of domain architecture, Pyruvate carboxyltransferase spans 5-255 (ITIVDTTLRD…DTGVDLFPLI (251 aa)). Substrate-binding positions include 13 to 14 (RD), serine 167, and histidine 194. Aspartate 14 contributes to the Mn(2+) binding site. Residues histidine 194 and histidine 196 each coordinate Mn(2+). Substrate is bound at residue tyrosine 285.

It belongs to the 4-hydroxy-2-oxovalerate aldolase family.

The enzyme catalyses (S)-4-hydroxy-2-oxopentanoate = acetaldehyde + pyruvate. The protein is 4-hydroxy-2-oxovalerate aldolase 2 of Rhodococcus jostii (strain RHA1).